The following is a 172-amino-acid chain: Monopolar attachment protein 1 (172 aa).

Positions 15–30 (KKNKNPKISNSKKKNS) are enriched in basic residues. Positions 15-43 (KKNKNPKISNSKKKNSTRPALQDKTNQTL) are disordered. Over residues 31–43 (TRPALQDKTNQTL) the composition is skewed to polar residues. The POLO box domain (PBD)-binding signature appears at 100–102 (STP).

As to quaternary structure, interacts with rec8, Interacts with plo1.

Its subcellular location is the nucleus. It is found in the chromosome. It localises to the centromere. The protein localises to the kinetochore. Plays an important role in chromosome segregation during meiosis I by allowing meiotic rec8 to establish cohesion at the centromeric central core and thereby promote the side-by-side structure of kinetochores at meiosis I. Enables monopolar attachment during meiosis I. Required to facilitate kinetochore mono-orientation during meiosis I, when kinetochores on sister chromosomes face the same direction and are thus captured and pulled by spindle fibers from the same pole. Acts in collaboration with plo1. The polypeptide is Monopolar attachment protein 1 (moa1) (Schizosaccharomyces pombe (strain 972 / ATCC 24843) (Fission yeast)).